A 199-amino-acid polypeptide reads, in one-letter code: Imidazoleglycerol-phosphate dehydratase (199 aa).

Belongs to the imidazoleglycerol-phosphate dehydratase family.

It localises to the cytoplasm. The catalysed reaction is D-erythro-1-(imidazol-4-yl)glycerol 3-phosphate = 3-(imidazol-4-yl)-2-oxopropyl phosphate + H2O. It functions in the pathway amino-acid biosynthesis; L-histidine biosynthesis; L-histidine from 5-phospho-alpha-D-ribose 1-diphosphate: step 6/9. In Acidithiobacillus ferrooxidans (strain ATCC 53993 / BNL-5-31) (Leptospirillum ferrooxidans (ATCC 53993)), this protein is Imidazoleglycerol-phosphate dehydratase.